We begin with the raw amino-acid sequence, 236 residues long: 4-aminobenzoate synthase (236 aa).

6 residues coordinate Fe(2+): E87, H94, E148, H180, D184, and H187.

The protein belongs to the CADD family. Homodimer. It depends on Fe(2+) as a cofactor. The cofactor is Mn(2+).

Involved in de novo para-aminobenzoate (PABA) biosynthesis. Acts as a self-sacrificing or 'suicide' enzyme that utilizes its own active site tyrosine residue(s) as the substrate for PABA synthesis. The side chain of the tyrosine residue is released from the protein backbone via cleavage of the C(alpha)-C(beta) bond, leaving a glycine in place of the original tyrosine residue. Reaction requires O(2) and a reduced dimetal cofactor. This Chlamydia muridarum (strain MoPn / Nigg) protein is 4-aminobenzoate synthase.